A 153-amino-acid polypeptide reads, in one-letter code: MSKLAELQAETREIIEDLLNDGSEPNALYIIEHHIAHHDFDLLEKIAVDAFKAGYEVSEAEEFKDDDGKPIFCFDIISEVELKAEIIDAQQKEILPLLEKHNGIYDGWGTYFEDPNADDDEYGDDGEFLDDEDEYGDDGEFFDDEDEEEPRVH.

Positions 114-153 are disordered; that stretch reads DPNADDDEYGDDGEFLDDEDEYGDDGEFFDDEDEEEPRVH. Positions 115–153 are enriched in acidic residues; that stretch reads PNADDDEYGDDGEFLDDEDEYGDDGEFFDDEDEEEPRVH.

It belongs to the RraB family. Interacts with the C-terminal region of Rne.

The protein resides in the cytoplasm. Its function is as follows. Globally modulates RNA abundance by binding to RNase E (Rne) and regulating its endonucleolytic activity. Can modulate Rne action in a substrate-dependent manner by altering the composition of the degradosome. The polypeptide is Regulator of ribonuclease activity B (Haemophilus influenzae (strain ATCC 51907 / DSM 11121 / KW20 / Rd)).